The chain runs to 464 residues: Non-neuronal cytoplasmic intermediate filament protein (464 aa).

The segment covering M1–T14 has biased composition (polar residues). The tract at residues M1 to S59 is disordered. Residues M1–E101 form a head region. Residues S17–R27 are compositionally biased toward gly residues. A compositionally biased stretch (low complexity) spans A45–S59. The IF rod domain occupies E98–L413. The interval L102 to Q133 is coil 1A. Residues E134–L144 form a linker 1 region. A coil 1B region spans residues Y145–I237. The tract at residues R238–G264 is linker 2. Positions P265–L413 are coil 2. The tail stretch occupies residues F414–K464. The disordered stretch occupies residues G415–K464. Over residues G420 to S438 the composition is skewed to low complexity. The span at G439–S448 shows a compositional bias: gly residues. Positions S449–K464 are enriched in low complexity.

It belongs to the intermediate filament family. As to quaternary structure, can form homopolymers.

Its subcellular location is the cytoplasm. This chain is Non-neuronal cytoplasmic intermediate filament protein, found in Branchiostoma lanceolatum (Common lancelet).